Consider the following 283-residue polypeptide: Octanoyl-[GcvH]:protein N-octanoyltransferase (283 aa).

Residues 42–248 (GQSDAVVRTW…TLQSFGGELY (207 aa)) form the BPL/LPL catalytic domain. Cys-147 serves as the catalytic Acyl-thioester intermediate.

Belongs to the octanoyltransferase LipL family.

The enzyme catalyses N(6)-octanoyl-L-lysyl-[glycine-cleavage complex H protein] + L-lysyl-[lipoyl-carrier protein] = N(6)-octanoyl-L-lysyl-[lipoyl-carrier protein] + L-lysyl-[glycine-cleavage complex H protein]. It functions in the pathway protein modification; protein lipoylation via endogenous pathway; protein N(6)-(lipoyl)lysine from octanoyl-[acyl-carrier-protein]. Catalyzes the amidotransfer (transamidation) of the octanoyl moiety from octanoyl-GcvH to the lipoyl domain of the E2 subunit of lipoate-dependent enzymes. This is Octanoyl-[GcvH]:protein N-octanoyltransferase from Geobacillus kaustophilus (strain HTA426).